A 140-amino-acid polypeptide reads, in one-letter code: Gonadotropin subunit beta-2 (140 aa).

The signal sequence occupies residues 1–24 (MSVYPECTWLLFVCLCHLLVSAGG). 6 disulfide bridges follow: Cys-30–Cys-78, Cys-44–Cys-93, Cys-47–Cys-131, Cys-55–Cys-109, Cys-59–Cys-111, and Cys-114–Cys-121. Asn-34 carries an N-linked (GlcNAc...) asparagine glycan.

This sequence belongs to the glycoprotein hormones subunit beta family. As to quaternary structure, heterodimer of an alpha and a beta chain.

Its subcellular location is the secreted. Its function is as follows. Involved in gametogenesis and steroidogenesis. This is Gonadotropin subunit beta-2 (cgbb) from Anguilla anguilla (European freshwater eel).